Reading from the N-terminus, the 98-residue chain is NADH-ubiquinone oxidoreductase chain 4L (98 aa).

The next 3 helical transmembrane spans lie at 1-21, 29-49, and 61-81; these read MSMV…GMLV, SLLC…VTIL, and IVLL…LVMV.

Belongs to the complex I subunit 4L family. As to quaternary structure, core subunit of respiratory chain NADH dehydrogenase (Complex I) which is composed of 45 different subunits.

The protein resides in the mitochondrion inner membrane. The enzyme catalyses a ubiquinone + NADH + 5 H(+)(in) = a ubiquinol + NAD(+) + 4 H(+)(out). In terms of biological role, core subunit of the mitochondrial membrane respiratory chain NADH dehydrogenase (Complex I) which catalyzes electron transfer from NADH through the respiratory chain, using ubiquinone as an electron acceptor. Part of the enzyme membrane arm which is embedded in the lipid bilayer and involved in proton translocation. The protein is NADH-ubiquinone oxidoreductase chain 4L (MT-ND4L) of Vulpes vulpes (Red fox).